Consider the following 434-residue polypeptide: Trigger factor 2 (434 aa).

Residues 164 to 247 (GDTVTVDYDC…VKKVERIEIL (84 aa)) enclose the PPIase FKBP-type domain.

It belongs to the FKBP-type PPIase family. Tig subfamily.

The protein localises to the cytoplasm. The catalysed reaction is [protein]-peptidylproline (omega=180) = [protein]-peptidylproline (omega=0). In terms of biological role, involved in protein export. Acts as a chaperone by maintaining the newly synthesized protein in an open conformation. Functions as a peptidyl-prolyl cis-trans isomerase. The sequence is that of Trigger factor 2 from Desulfitobacterium hafniense (strain Y51).